A 72-amino-acid polypeptide reads, in one-letter code: MRRLVLLLAISLLLYQDLPVRSEFELDRICGYGTARCRKKCRSQEYRIGRCPNTFACCLRKWDESLLNRTKP.

A signal peptide spans 1-22 (MRRLVLLLAISLLLYQDLPVRS). Disulfide bonds link Cys-30-Cys-57, Cys-37-Cys-51, and Cys-41-Cys-58.

Belongs to the beta-defensin family.

Its subcellular location is the secreted. In terms of biological role, has antimicrobial activity. The polypeptide is Beta-defensin 104A (DEFB104A) (Gorilla gorilla gorilla (Western lowland gorilla)).